A 247-amino-acid chain; its full sequence is Orotidine 5'-phosphate decarboxylase (247 aa).

Residues Asp-16, Lys-38, 66 to 75 (DLKFHDIPNT), Thr-130, Arg-191, Gln-200, Gly-220, and Arg-221 each bind substrate. The active-site Proton donor is Lys-68.

Belongs to the OMP decarboxylase family. Type 1 subfamily. In terms of assembly, homodimer.

It catalyses the reaction orotidine 5'-phosphate + H(+) = UMP + CO2. It functions in the pathway pyrimidine metabolism; UMP biosynthesis via de novo pathway; UMP from orotate: step 2/2. Functionally, catalyzes the decarboxylation of orotidine 5'-monophosphate (OMP) to uridine 5'-monophosphate (UMP). The polypeptide is Orotidine 5'-phosphate decarboxylase (Rhodospirillum rubrum (strain ATCC 11170 / ATH 1.1.1 / DSM 467 / LMG 4362 / NCIMB 8255 / S1)).